The sequence spans 421 residues: Imidazolonepropionase (421 aa).

Residues His81 and His83 each coordinate Fe(3+). Residues His81 and His83 each coordinate Zn(2+). Arg90, Tyr153, and His186 together coordinate 4-imidazolone-5-propanoate. Tyr153 contacts N-formimidoyl-L-glutamate. His251 contributes to the Fe(3+) binding site. His251 serves as a coordination point for Zn(2+). 4-imidazolone-5-propanoate is bound at residue Glu254. Asp326 is a binding site for Fe(3+). Zn(2+) is bound at residue Asp326. N-formimidoyl-L-glutamate contacts are provided by Asn328 and Gly330. Ser331 provides a ligand contact to 4-imidazolone-5-propanoate.

Belongs to the metallo-dependent hydrolases superfamily. HutI family. Zn(2+) serves as cofactor. Requires Fe(3+) as cofactor.

The protein resides in the cytoplasm. The catalysed reaction is 4-imidazolone-5-propanoate + H2O = N-formimidoyl-L-glutamate. Its pathway is amino-acid degradation; L-histidine degradation into L-glutamate; N-formimidoyl-L-glutamate from L-histidine: step 3/3. Functionally, catalyzes the hydrolytic cleavage of the carbon-nitrogen bond in imidazolone-5-propanoate to yield N-formimidoyl-L-glutamate. It is the third step in the universal histidine degradation pathway. The polypeptide is Imidazolonepropionase (Streptococcus pyogenes serotype M12 (strain MGAS2096)).